Reading from the N-terminus, the 312-residue chain is Phosphoribosylaminoimidazole-succinocarboxamide synthase (312 aa).

It belongs to the SAICAR synthetase family.

The enzyme catalyses 5-amino-1-(5-phospho-D-ribosyl)imidazole-4-carboxylate + L-aspartate + ATP = (2S)-2-[5-amino-1-(5-phospho-beta-D-ribosyl)imidazole-4-carboxamido]succinate + ADP + phosphate + 2 H(+). Its pathway is purine metabolism; IMP biosynthesis via de novo pathway; 5-amino-1-(5-phospho-D-ribosyl)imidazole-4-carboxamide from 5-amino-1-(5-phospho-D-ribosyl)imidazole-4-carboxylate: step 1/2. This chain is Phosphoribosylaminoimidazole-succinocarboxamide synthase, found in Legionella pneumophila (strain Lens).